A 375-amino-acid chain; its full sequence is Methylthioribose-1-phosphate isomerase (375 aa).

Substrate-binding positions include 53–55, Arg90, and Gln202; that span reads RGA. The active-site Proton donor is Asp243. Substrate is bound at residue 253–254; it reads NK.

It belongs to the eIF-2B alpha/beta/delta subunits family. MtnA subfamily.

It carries out the reaction 5-(methylsulfanyl)-alpha-D-ribose 1-phosphate = 5-(methylsulfanyl)-D-ribulose 1-phosphate. Its pathway is amino-acid biosynthesis; L-methionine biosynthesis via salvage pathway; L-methionine from S-methyl-5-thio-alpha-D-ribose 1-phosphate: step 1/6. Functionally, catalyzes the interconversion of methylthioribose-1-phosphate (MTR-1-P) into methylthioribulose-1-phosphate (MTRu-1-P). This is Methylthioribose-1-phosphate isomerase from Rhodospirillum centenum (strain ATCC 51521 / SW).